The chain runs to 1637 residues: Kinesin-like protein KIF21B (1637 aa).

One can recognise a Kinesin motor domain in the interval C8–I370. G87–T94 lines the ATP pocket. Coiled-coil stretches lie at residues V376–G604 and N631–R824. Positions M400 to Q1099 are interaction with TRIM3. The segment covering A509–S533 has biased composition (low complexity). Disordered regions lie at residues A509 to S538 and K552 to K628. Acidic residues predominate over residues N578–E627. A Phosphoserine modification is found at S579. Position 582 is a phosphothreonine (T582). Disordered regions lie at residues S830–S865 and F880–Q906. Over residues S846–S865 the composition is skewed to low complexity. Residues M928–T1016 are a coiled coil. A phosphoserine mark is found at S1149, S1167, and S1215. Positions R1194–L1217 are enriched in polar residues. Residues R1194–N1251 are disordered. A Phosphothreonine modification is found at T1237. S1241 is modified (phosphoserine). WD repeat units lie at residues G1306–A1343, G1346–R1384, Q1410–K1448, G1451–I1493, P1502–Q1539, A1543–E1582, and G1585–L1622.

Belongs to the TRAFAC class myosin-kinesin ATPase superfamily. Kinesin family. As to quaternary structure, interacts with TRIM3; the interaction positively affects motility of KIF21B. Interacts with GABARAP and GABA(A) receptor subunits: GABRG2, GABRA1 and GABRA2. May interact with GABA(A) receptor subunits: GABRB2 and GABRB3.

Its subcellular location is the cytoplasm. The protein resides in the cytoskeleton. It is found in the cell projection. It localises to the dendrite. The protein localises to the growth cone. Its subcellular location is the axon. The protein resides in the cytoplasmic vesicle. Functionally, plus-end directed microtubule-dependent motor protein which displays processive activity. Is involved in regulation of microtubule dynamics, synapse function and neuronal morphology, including dendritic tree branching and spine formation. Plays a role in lerning and memory. Involved in delivery of gamma-aminobutyric acid (GABA(A)) receptor to cell surface. This Homo sapiens (Human) protein is Kinesin-like protein KIF21B (KIF21B).